The sequence spans 419 residues: UDP-N-acetylglucosamine 1-carboxyvinyltransferase (419 aa).

22–23 provides a ligand contact to phosphoenolpyruvate; it reads KN. Arg-95 serves as a coordination point for UDP-N-acetyl-alpha-D-glucosamine. Cys-119 (proton donor) is an active-site residue. Residue Cys-119 is modified to 2-(S-cysteinyl)pyruvic acid O-phosphothioketal. Residues 164 to 167, Asp-308, and Ile-330 each bind UDP-N-acetyl-alpha-D-glucosamine; that span reads KVSV.

This sequence belongs to the EPSP synthase family. MurA subfamily.

The protein resides in the cytoplasm. It carries out the reaction phosphoenolpyruvate + UDP-N-acetyl-alpha-D-glucosamine = UDP-N-acetyl-3-O-(1-carboxyvinyl)-alpha-D-glucosamine + phosphate. Its pathway is cell wall biogenesis; peptidoglycan biosynthesis. Functionally, cell wall formation. Adds enolpyruvyl to UDP-N-acetylglucosamine. This chain is UDP-N-acetylglucosamine 1-carboxyvinyltransferase, found in Rickettsia conorii (strain ATCC VR-613 / Malish 7).